A 165-amino-acid polypeptide reads, in one-letter code: Myosin regulatory light chain 2, ventricular/cardiac muscle isoform (165 aa).

Residue Ser2 is modified to N,N,N-trimethylserine. Residue Asn14 is modified to Deamidated asparagine. Ser15 and Ser19 each carry phosphoserine. EF-hand domains are found at residues Thr24–Val59, Asp94–Arg129, and Phe130–Lys165. 4 residues coordinate Ca(2+): Asp37, Asn39, Asp41, and Asp48. A Phosphothreonine modification is found at Thr52.

As to quaternary structure, myosin is a hexamer of 2 heavy chains and 4 light chains. Interacts with MYOC. N-terminus is methylated by METTL11A/NTM1. Post-translationally, phosphorylated by MYLK3 and MYLK2; promotes cardiac muscle contraction and function. Dephosphorylated by PPP1CB complexed to PPP1R12B. The phosphorylated form in adult is expressed as gradients across the heart from endocardium (low phosphorylation) to epicardium (high phosphorylation); regulates cardiac torsion and workload distribution.

Its subcellular location is the cytoplasm. The protein resides in the myofibril. It localises to the sarcomere. The protein localises to the a band. Contractile protein that plays a role in heart development and function. Following phosphorylation, plays a role in cross-bridge cycling kinetics and cardiac muscle contraction by increasing myosin lever arm stiffness and promoting myosin head diffusion; as a consequence of the increase in maximum contraction force and calcium sensitivity of contraction force. These events altogether slow down myosin kinetics and prolong duty cycle resulting in accumulated myosins being cooperatively recruited to actin binding sites to sustain thin filament activation as a means to fine-tune myofilament calcium sensitivity to force. During cardiogenesis plays an early role in cardiac contractility by promoting cardiac myofibril assembly. This Oryctolagus cuniculus (Rabbit) protein is Myosin regulatory light chain 2, ventricular/cardiac muscle isoform.